The chain runs to 153 residues: Probable histone H2A.4 (153 aa).

Residues 1 to 12 (MDSGTKVKKGAA) are compositionally biased toward basic residues. Disordered stretches follow at residues 1-30 (MDSGTKVKKGAAGRRSGGGPKKKPVSRSVK) and 129-153 (KSEKAASTTKTPKSPSKATKSPKKS). The span at 133–147 (AASTTKTPKSPSKAT) shows a compositional bias: low complexity. The short motif at 149-152 (SPKK) is the SPKK motif element.

This sequence belongs to the histone H2A family. In terms of assembly, the nucleosome is a histone octamer containing two molecules each of H2A, H2B, H3 and H4 assembled in one H3-H4 heterotetramer and two H2A-H2B heterodimers. The octamer wraps approximately 147 bp of DNA. Post-translationally, not ubiquitinated.

The protein resides in the nucleus. It is found in the chromosome. Its function is as follows. Core component of nucleosome. Nucleosomes wrap and compact DNA into chromatin, limiting DNA accessibility to the cellular machineries which require DNA as a template. Histones thereby play a central role in transcription regulation, DNA repair, DNA replication and chromosomal stability. DNA accessibility is regulated via a complex set of post-translational modifications of histones, also called histone code, and nucleosome remodeling. This is Probable histone H2A.4 from Arabidopsis thaliana (Mouse-ear cress).